The sequence spans 312 residues: Pantothenate kinase (312 aa).

Position 97–104 (97–104 (GSVAVGKS)) interacts with ATP.

The protein belongs to the prokaryotic pantothenate kinase family.

It localises to the cytoplasm. The catalysed reaction is (R)-pantothenate + ATP = (R)-4'-phosphopantothenate + ADP + H(+). It functions in the pathway cofactor biosynthesis; coenzyme A biosynthesis; CoA from (R)-pantothenate: step 1/5. The polypeptide is Pantothenate kinase (coaA) (Mycobacterium leprae (strain TN)).